The chain runs to 217 residues: Ribonuclease T (217 aa).

The region spanning 20-195 (VVVDVETAGF…YDTEKTAELF (176 aa)) is the Exonuclease domain. 4 residues coordinate Mg(2+): D23, E25, H182, and D187. H182 functions as the Proton donor/acceptor in the catalytic mechanism.

The protein belongs to the RNase T family. As to quaternary structure, homodimer. It depends on Mg(2+) as a cofactor.

In terms of biological role, trims short 3' overhangs of a variety of RNA species, leaving a one or two nucleotide 3' overhang. Responsible for the end-turnover of tRNA: specifically removes the terminal AMP residue from uncharged tRNA (tRNA-C-C-A). Also appears to be involved in tRNA biosynthesis. The protein is Ribonuclease T of Vibrio vulnificus (strain CMCP6).